A 167-amino-acid polypeptide reads, in one-letter code: DNA-directed RNA polymerase II subunit rpb-9 (167 aa).

Positions 28–49 are disordered; sequence DDMYDQNGASPAPSQNEKPGKS. A compositionally biased stretch (polar residues) spans 34–44; it reads NGASPAPSQNE. Positions 59, 62, 81, 84, 128, 131, 156, and 161 each coordinate Zn(2+). The segment at 59–84 adopts a C4-type zinc-finger fold; that stretch reads CPECNNMLYPREDKESRVLMYSCRNC. Residues 124–166 form a TFIIS-type zinc finger; the sequence is EEHQCPVCGKSKAVFFQAQTKKAEEEMRLYYVCASQDCQHRWT.

This sequence belongs to the archaeal RpoM/eukaryotic RPA12/RPB9/RPC11 RNA polymerase family. As to quaternary structure, component of the RNA polymerase II (Pol II) complex consisting of 12 subunits. As to expression, expressed in the soma and in the germline.

The protein resides in the nucleus. It localises to the nucleolus. Its function is as follows. DNA-dependent RNA polymerase catalyzes the transcription of DNA into RNA using the four ribonucleoside triphosphates as substrates. Component of RNA polymerase II which synthesizes mRNA precursors and many functional non-coding RNAs. Pol II is the central component of the basal RNA polymerase II transcription machinery. It is composed of mobile elements that move relative to each other. RPB9 is part of the upper jaw surrounding the central large cleft and thought to grab the incoming DNA template. Recruits ints-6, a component of the Integrator complex to PIWI-interacting RNA (piRNA) genes, to mediate Integrator complex-dependent cleavage of 3' ends of nascent transcripts upon RNA Pol II backtracking to terminate transcription and generate piRNA precursors. Promotes the biogenesis of secondary 22G-siRNAs (a class of 22 nucleotide siRNAs that possess a triphosphorylated guanine residue at the 5'-end). Involved in gene silencing mediated by a class of 21 nucleotide piRNAs that possess a uracil residue at the 5'-end (also called 21U-RNAs) and guide the Piwi protein prg-1 to its DNA targets for silencing. Plays a role in small RNA-directed transgenerational epigenetic inheritance (also called RNAe) over several generations. Not required for the transgenerational inheritance of exogenous small interfering RNAs (RNAi). May play a role in the silencing of the DNA transposable elements from the DNA transposon families, Chapaev-2 and CEMUDR1. In Caenorhabditis elegans, this protein is DNA-directed RNA polymerase II subunit rpb-9.